Consider the following 58-residue polypeptide: Large ribosomal subunit protein bL32 (58 aa).

This sequence belongs to the bacterial ribosomal protein bL32 family.

The polypeptide is Large ribosomal subunit protein bL32 (Prochlorococcus marinus (strain MIT 9303)).